The chain runs to 236 residues: UPF0502 protein BceJ2315_62050 (236 aa).

Belongs to the UPF0502 family.

This is UPF0502 protein BceJ2315_62050 from Burkholderia cenocepacia (strain ATCC BAA-245 / DSM 16553 / LMG 16656 / NCTC 13227 / J2315 / CF5610) (Burkholderia cepacia (strain J2315)).